Consider the following 436-residue polypeptide: Aminopeptidase C (436 aa).

Residues C68, H356, and N378 contribute to the active site.

This sequence belongs to the peptidase C1 family. Homohexamer.

It carries out the reaction Inactivates bleomycin B2 (a cytotoxic glycometallopeptide) by hydrolysis of a carboxyamide bond of beta-aminoalanine, but also shows general aminopeptidase activity. The specificity varies somewhat with source, but amino acid arylamides of Met, Leu and Ala are preferred.. Its function is as follows. Hydrolyzes naphthylamide-substituted amino acids as well as di- and tripeptides in which the half-cystine residue is involved in a disulfide loop, notably in oxytocin and vasopressin. Also has a bleomycin hydrolase activity. The chain is Aminopeptidase C (pepC) from Lactococcus lactis subsp. cremoris (Streptococcus cremoris).